Reading from the N-terminus, the 530-residue chain is Estrogen receptor beta (530 aa).

The tract at residues 1 to 148 is modulating; it reads MDIKNSPSSL…GPSSKRDAHF (148 aa). The residue at position 61 (Ser-61) is a Phosphoserine; alternate. Ser-61 carries an O-linked (GlcNAc) serine; alternate glycan. Phosphoserine; by MAPK occurs at positions 87 and 105. NR C4-type zinc fingers lie at residues 149 to 169 and 185 to 209; these read CAVC…CEGC and CPAT…LRKC. A DNA-binding region (nuclear receptor) is located at residues 149–214; it reads CAVCSDYASG…RLRKCYEVGM (66 aa). The region spanning 264-498 is the NR LBD domain; that stretch reads SPEQLVLTLL…DLLLEMMNAH (235 aa). The disordered stretch occupies residues 507–530; it reads ITGSECSPAEDSKSTEGSQNPQSP. A compositionally biased stretch (polar residues) spans 521 to 530; that stretch reads TEGSQNPQSP.

Belongs to the nuclear hormone receptor family. NR3 subfamily. In terms of assembly, binds DNA as a homodimer. Can form a heterodimer with ESR1. Interacts with NCOA1, NCOA3, NCOA5 and NCOA6 coactivators, leading to a strong increase of transcription of target genes. Interacts with UBE1C and AKAP13. Interacts with DNTTIP2. Interacts with CCDC62 in the presence of estradiol/E2; this interaction seems to enhance the transcription of target genes. Interacts with DNAAF4. Interacts with PRMT2. Interacts with CCAR2 (via N-terminus) in a ligand-independent manner. Interacts with RBM39, in the presence of estradiol (E2). Interacts with STUB1/CHIP. Phosphorylation at Ser-87 and Ser-105 recruits NCOA1.

It is found in the nucleus. Nuclear hormone receptor. Binds estrogens with an affinity similar to that of ESR1/ER-alpha, and activates expression of reporter genes containing estrogen response elements (ERE) in an estrogen-dependent manner. The chain is Estrogen receptor beta (ESR2) from Callithrix jacchus (White-tufted-ear marmoset).